The primary structure comprises 389 residues: RHOMBOID-like protein 1 (389 aa).

A run of 7 helical transmembrane segments spans residues 56 to 76, 136 to 156, 163 to 183, 191 to 211, 221 to 241, 244 to 264, and 295 to 315; these read PWLVPAIVVANIALFAISMFI, IWLHAGVFHVLANMLSLIFIG, FGFVRIGLLYMISGFGGSLLS, ISVGASGALFGLLGAMLSELL, FAALLTLIFIIAINLAVGILP, DNFAHLGGFTSGFLLGFVFLI, and VLWITSLVLLIAGYTAGLVVL. The Nucleophile role is filled by S196. The active-site Charge relay system is H248.

This sequence belongs to the peptidase S54 family. In terms of tissue distribution, expressed in roots, seedlings, leaves, stems and flowers.

The protein localises to the golgi apparatus membrane. The enzyme catalyses Cleaves type-1 transmembrane domains using a catalytic dyad composed of serine and histidine that are contributed by different transmembrane domains.. Its function is as follows. Probable rhomboid-type serine protease that catalyzes intramembrane proteolysis. Unable to cleave the Drosophila protein Spitz. The chain is RHOMBOID-like protein 1 from Arabidopsis thaliana (Mouse-ear cress).